The chain runs to 205 residues: Peptidyl-prolyl cis-trans isomerase B (205 aa).

The signal sequence occupies residues 1-20 (MKFSGLWCWLLLFLSVNVIA). Residues 39–198 (FFDIEHGEEK…EAVKIAKCGE (160 aa)) form the PPIase cyclophilin-type domain.

The protein belongs to the cyclophilin-type PPIase family. PPIase B subfamily.

The protein resides in the secreted. It catalyses the reaction [protein]-peptidylproline (omega=180) = [protein]-peptidylproline (omega=0). With respect to regulation, cyclosporin A (CsA) inhibits CYPB. In terms of biological role, PPIases accelerate the folding of proteins. It catalyzes the cis-trans isomerization of proline imidic peptide bonds in oligopeptides. The sequence is that of Peptidyl-prolyl cis-trans isomerase B (CPR2) from Saccharomyces cerevisiae (strain ATCC 204508 / S288c) (Baker's yeast).